The chain runs to 384 residues: F-box only protein 5 (384 aa).

Residues 25–67 (EVKGHKVSPRKTGALSLRSPAATNVSTPLESRSKGPHNKENYQ) are disordered. The segment covering 45–54 (AATNVSTPLE) has biased composition (polar residues). Residues 55 to 67 (SRSKGPHNKENYQ) show a composition bias toward basic and acidic residues. Residues 187 to 234 (CKLMRKDMRHILARILGLLGDCDLISCTKVSRTWRKIICQDQLALQRW) form the F-box domain. A ZBR-type zinc finger spans residues 311–359 (SLRRCSRCSSPARFDAVMQRAVCTRISCAFEFCTLCQSAFHDSTPCRNT). The Zn(2+) site is built by cysteine 315, cysteine 318, cysteine 333, cysteine 338, cysteine 343, cysteine 346, histidine 351, and cysteine 356.

Part of a SCF (SKP1-cullin-F-box) protein ligase complex.

It is found in the nucleus. The protein localises to the cytoplasm. Its pathway is protein modification; protein ubiquitination. Functionally, during embryonic development, regulates the integrity of the genome and therefore the cell cycle progression by preventing rereplication through an APC-Cdh1-dependent mechanism. The chain is F-box only protein 5 from Danio rerio (Zebrafish).